Reading from the N-terminus, the 609-residue chain is Aspartate--tRNA(Asp/Asn) ligase (609 aa).

L-aspartate is bound at residue E175. The interval 199–202 (QQFK) is aspartate. L-aspartate-binding residues include R221 and H468. An ATP-binding site is contributed by 221–223 (RDE). E502 contacts ATP. Residue R509 coordinates L-aspartate. 554-557 (GIDR) contributes to the ATP binding site.

Belongs to the class-II aminoacyl-tRNA synthetase family. Type 1 subfamily. Homodimer.

The protein resides in the cytoplasm. The enzyme catalyses tRNA(Asx) + L-aspartate + ATP = L-aspartyl-tRNA(Asx) + AMP + diphosphate. Functionally, aspartyl-tRNA synthetase with relaxed tRNA specificity since it is able to aspartylate not only its cognate tRNA(Asp) but also tRNA(Asn). Reaction proceeds in two steps: L-aspartate is first activated by ATP to form Asp-AMP and then transferred to the acceptor end of tRNA(Asp/Asn). The polypeptide is Aspartate--tRNA(Asp/Asn) ligase (Caulobacter sp. (strain K31)).